Reading from the N-terminus, the 29-residue chain is Conotoxin SIVC (29 aa).

Ala-1 bears the N-acetylalanine; partial mark. The residue at position 2 (Pro-2) is a 4-hydroxyproline. Residues Thr-7 and Thr-9 are each glycosylated (O-linked (HexNAc...) threonine). 4-hydroxyproline occurs at positions 18 and 22. Cysteine amide is present on Cys-29.

It belongs to the conotoxin A superfamily. O-linked glycans consist of Hex4-HexNAc2 hexasaccharides. Post-translationally, N-terminus is found to be free and N-acetylated, depending on the fraction studied. In terms of processing, contains 3 disulfide bonds. Expressed by the venom duct. Low expression in the distal venom duct sections.

It localises to the secreted. In terms of biological role, probable neurotoxin with ion channel inhibitor activity. In Conus striatus (Striated cone), this protein is Conotoxin SIVC.